The sequence spans 185 residues: MKMIVGLGNIGPQYDNTRHNTGFMVVDAFAQQHGIALTTRKMDARFGSGLVNGEKVLVVKPTTFMNESGRAVHPIMDYFKIDVADVMVVQDDMDLPLGRIRLRDHGSAGGHNGIKSIIAHVGTQNFGRLKVGIAHPQQHTVVDYVLGKFTTDQRPVFNQAADRAVAALDDWVAGSDFMQLMNQYN.

TRNA is bound at residue Tyr14. His19 (proton acceptor) is an active-site residue. The tRNA site is built by Phe64, Asn66, and Asn112.

It belongs to the PTH family. As to quaternary structure, monomer.

The protein resides in the cytoplasm. The catalysed reaction is an N-acyl-L-alpha-aminoacyl-tRNA + H2O = an N-acyl-L-amino acid + a tRNA + H(+). Hydrolyzes ribosome-free peptidyl-tRNAs (with 1 or more amino acids incorporated), which drop off the ribosome during protein synthesis, or as a result of ribosome stalling. Functionally, catalyzes the release of premature peptidyl moieties from peptidyl-tRNA molecules trapped in stalled 50S ribosomal subunits, and thus maintains levels of free tRNAs and 50S ribosomes. The sequence is that of Peptidyl-tRNA hydrolase from Levilactobacillus brevis (strain ATCC 367 / BCRC 12310 / CIP 105137 / JCM 1170 / LMG 11437 / NCIMB 947 / NCTC 947) (Lactobacillus brevis).